Consider the following 338-residue polypeptide: P2Y purinoceptor 14 (338 aa).

Over 1–29 (MINSTSTQPPDESCSQNLLITQQIIPVLY) the chain is Extracellular. Residue Asn-3 is glycosylated (N-linked (GlcNAc...) asparagine). The chain crosses the membrane as a helical span at residues 30–50 (CMVFIAGILLNGVSGWIFFYV). Residues 51 to 55 (PSSKS) are Cytoplasmic-facing. A helical transmembrane segment spans residues 56-76 (FIIYLKNIVIADFVMSLTFPF). Residues 77–96 (KILGDSGLGPWQLNVFVCRV) lie on the Extracellular side of the membrane. Cys-94 and Cys-172 are disulfide-bonded. Residues 97–117 (SAVLFYVNMYVSIVFFGLISF) form a helical membrane-spanning segment. Over 118 to 139 (DRYYKIVKPLWTSFIQSVSYSK) the chain is Cytoplasmic. The helical transmembrane segment at 140–160 (LLSVIVWMLMLLLAVPNIILT) threads the bilayer. Asn-161 is a glycosylation site (N-linked (GlcNAc...) asparagine). The Extracellular portion of the chain corresponds to 161 to 188 (NQSVREVTQIKCIELKSELGRKWHKASN). A helical transmembrane segment spans residues 189–209 (YIFVAIFWIVFLLLIVFYTAI). Over 210–234 (TKKIFKSHLKSSRNSTSVKKKSSRN) the chain is Cytoplasmic. Residues 235 to 255 (IFSIVFVFFVCFVPYHIARIP) form a helical membrane-spanning segment. Over 256 to 278 (YTKSQTEAHYSCQSKEILRYMKE) the chain is Extracellular. Residues 279 to 299 (FTLLLSAANVCLDPIIYFFLC) traverse the membrane as a helical segment. The Cytoplasmic segment spans residues 300–338 (QPFREILCKKLHIPLKAQNDLDISRIKRGNTTLESTDTL).

This sequence belongs to the G-protein coupled receptor 1 family. Highest expression in the placenta, adipose tissue, stomach and intestine, intermediate levels in the brain, spleen, lung and heart, lowest levels in the kidney.

It localises to the cell membrane. Functionally, receptor for UDP-glucose and other UDP-sugar coupled to G-proteins. Not activated by ATP, ADP, UTP or ATP. The chain is P2Y purinoceptor 14 (P2RY14) from Homo sapiens (Human).